A 343-amino-acid polypeptide reads, in one-letter code: ATP-dependent 6-phosphofructokinase (343 aa).

Residues Gly-10, 73–74 (RV), and 103–106 (GEGT) each bind ATP. Glu-104 serves as a coordination point for Mg(2+). Residues 126–128 (TID), Arg-163, 170–172 (MGR), Glu-223, Arg-267, and 273–276 (HIQR) each bind substrate. Residue Asp-128 is the Proton acceptor of the active site.

The protein belongs to the phosphofructokinase type A (PFKA) family. Mixed-substrate PFK group III subfamily. Homodimer or homotetramer. Requires Mg(2+) as cofactor.

It is found in the cytoplasm. The enzyme catalyses beta-D-fructose 6-phosphate + ATP = beta-D-fructose 1,6-bisphosphate + ADP + H(+). It catalyses the reaction D-tagatofuranose 6-phosphate + ATP = D-tagatofuranose 1,6-bisphosphate + ADP + H(+). It functions in the pathway carbohydrate degradation; glycolysis; D-glyceraldehyde 3-phosphate and glycerone phosphate from D-glucose: step 3/4. Its function is as follows. Catalyzes the phosphorylation of D-fructose 6-phosphate to fructose 1,6-bisphosphate by ATP, the first committing step of glycolysis. Can also catalyze the phosphorylation of tagatose-6-phosphate. The protein is ATP-dependent 6-phosphofructokinase of Mycobacterium tuberculosis (strain CDC 1551 / Oshkosh).